The following is a 128-amino-acid chain: Cyclic ether formation enzyme gkaZ (128 aa).

An N-terminal signal peptide occupies residues 1-36 (MTTARALSDGLAYLLACFNAFCIQAHLTSRFSPAFS). A run of 2 helical transmembrane segments spans residues 61–81 (LRYM…LPGW) and 107–127 (WLLH…AIYV).

It belongs to the cyclic ether formation enzyme xenC family.

Its subcellular location is the membrane. Its pathway is mycotoxin biosynthesis. Functionally, cyclic ether formation enzyme; part of the gene cluster that mediates the biosynthesis of GKK1032, fungal natural products containing a macrocyclic para-cyclophane connected to a decahydrofluorene ring system that show potent antitumor activities. Within the pathway, gkaZ functions synergistically with gkaB and gkaX to form the cyclophane. The pathway begins with the PKS-NRPS gkaA which, with the help of the trans-enoyl reductase gkaC, synthesizes the polyketide-tyrosyl acyl thioester product which can be reductively off-loaded by the terminal reductase (R) domain in gkaA. The alpha/beta hydrolase gkaG is then required to catalyze the subsequent Knoevenagel condensation that affords the 3-pyrrolin-2-one ring, whereas the three proteins gkaB, gkaX and gkaZ then function synergistically to form the cyclophane. The sequence is that of Cyclic ether formation enzyme gkaZ from Penicillium citrinum.